We begin with the raw amino-acid sequence, 60 residues long: Cytotoxin 7 (60 aa).

4 cysteine pairs are disulfide-bonded: cysteine 3-cysteine 21, cysteine 14-cysteine 38, cysteine 42-cysteine 53, and cysteine 54-cysteine 59.

This sequence belongs to the three-finger toxin family. Short-chain subfamily. Type IA cytotoxin sub-subfamily. As to quaternary structure, monomer in solution; Homodimer and oligomer in the presence of negatively charged lipids forming a pore with a size ranging between 20 and 30 Angstroms. In terms of tissue distribution, expressed by the venom gland.

It is found in the secreted. The protein resides in the target cell membrane. Its function is as follows. Shows cytolytic activity on many different cells by forming pore in lipid membranes. In vivo, increases heart rate or kills the animal by cardiac arrest. In addition, it binds to heparin with high affinity, interacts with Kv channel-interacting protein 1 (KCNIP1) in a calcium-independent manner, and binds to integrin alpha-V/beta-3 (ITGAV/ITGB3) with moderate affinity. Preferentially binds acidic phospholipids like phosphatidylserine, phosphatidic acid and phosphatidyl glycerol. Has hemolytic activity towards human erythrocytes (EC(50)=0.171 uM) and cytolytic activity towards various cell lines. The polypeptide is Cytotoxin 7 (Naja naja (Indian cobra)).